A 310-amino-acid polypeptide reads, in one-letter code: p-hydroxybenzoic acid efflux pump subunit AaeA (310 aa).

A helical membrane pass occupies residues 12–32 (AITLVLVILAFIAIFRAWVYY).

This sequence belongs to the membrane fusion protein (MFP) (TC 8.A.1) family.

Its subcellular location is the cell inner membrane. In terms of biological role, forms an efflux pump with AaeB. The polypeptide is p-hydroxybenzoic acid efflux pump subunit AaeA (Salmonella gallinarum (strain 287/91 / NCTC 13346)).